Reading from the N-terminus, the 662-residue chain is Probable conjugal transfer protein TrbE part 2 (662 aa).

307–314 (GPTGSGKS) is an ATP binding site.

Belongs to the TrbE/VirB4 family.

In Sinorhizobium fredii (strain NBRC 101917 / NGR234), this protein is Probable conjugal transfer protein TrbE part 2 (trbEB).